A 179-amino-acid chain; its full sequence is Large ribosomal subunit protein uL5 (179 aa).

This sequence belongs to the universal ribosomal protein uL5 family. Part of the 50S ribosomal subunit; part of the 5S rRNA/L5/L18/L25 subcomplex. Contacts the 5S rRNA and the P site tRNA. Forms a bridge to the 30S subunit in the 70S ribosome.

Its function is as follows. This is one of the proteins that bind and probably mediate the attachment of the 5S RNA into the large ribosomal subunit, where it forms part of the central protuberance. In the 70S ribosome it contacts protein S13 of the 30S subunit (bridge B1b), connecting the 2 subunits; this bridge is implicated in subunit movement. Contacts the P site tRNA; the 5S rRNA and some of its associated proteins might help stabilize positioning of ribosome-bound tRNAs. The polypeptide is Large ribosomal subunit protein uL5 (Shewanella sp. (strain ANA-3)).